We begin with the raw amino-acid sequence, 200 residues long: MRLVVGMTGATGAPFGVRLLENLRQLPGVETHLVLSRWARTTIEMETGLSVAEVSALADVTHHPEDQGATISSGSFRTDGMVIVPCSMKTLAGIRTGYAEGLVARAADVVLKERRRLVLVPRETPLSEIHLQNMLELARMGVQLVPPMPAFYNNPQTVDDIVDHVVARILDQFDLPAPAARRWAGMRAARAAARSFGDAA.

FMN is bound by residues 9–11, Ser-36, 87–90, and Arg-122; these read GAT and SMKT.

This sequence belongs to the UbiX/PAD1 family. YclB subfamily. In terms of assembly, homododecamer.

It carries out the reaction dimethylallyl phosphate + FMNH2 = prenylated FMNH2 + phosphate. Involved in the non-oxidative decarboxylation and detoxification of phenolic derivatives under both aerobic and anaerobic conditions. Flavin prenyltransferase that catalyzes the synthesis of the prenylated FMN cofactor (prenyl-FMN) for phenolic acid decarboxylase. The chain is Probable UbiX-like flavin prenyltransferase from Streptomyces sp. (strain D7).